A 155-amino-acid chain; its full sequence is Myelin basic protein (155 aa).

The tract at residues 1–72 (MASATTSDHA…HQGARRQTDD (72 aa)) is disordered. Ala-2 is modified (N-acetylalanine; in forms C1, C2, C3 and C8). Position 12 is a deamidated glutamine; in forms C1, C2 and C3 (Gln-12). Positions 37 to 49 (GSRKVPEKGKEPA) are enriched in basic and acidic residues. Phosphoserine; in forms C1, C2 and C3 occurs at positions 73 and 84. Residues 113–155 (RAHYGAAGSSKSKDGFRGRRDGSGTLSSFFKMGKKGEGSPARR) are disordered. Residues Ser-121 and Ser-122 each carry the phosphoserine; in forms C1 and C3 modification. Positions 123–134 (KSKDGFRGRRDG) are enriched in basic and acidic residues. 3 positions are modified to phosphoserine; in forms C1, C2 and C3: Ser-135, Ser-139, and Ser-140.

Belongs to the myelin basic protein family. Several charge isomers are produced as a result of optional post-translational modifications, such as phosphorylation, deamidation and citrullination. Dogfish MBP contains four major components designated as C1, C2, C3 and C8. C1 and C3, but not C2 are phosphorylated at either Ser-121 or Ser-122; C2 is phosphorylated at 2 or 3 sites among Ser-135, Ser-139 and Ser-140. Hydroxyproline and citrulline are present but were not identified in either C1, C2 or C3, which suggests their presence in C8.

The protein localises to the myelin membrane. In terms of biological role, this protein may function to maintain proper structure of myelin. This Squalus acanthias (Spiny dogfish) protein is Myelin basic protein (MBP).